Reading from the N-terminus, the 38-residue chain is Cytochrome b6-f complex subunit 5 (38 aa).

A helical membrane pass occupies residues 5-25 (LLLGIVLGLIPITLAGLFVAA).

It belongs to the PetG family. In terms of assembly, the 4 large subunits of the cytochrome b6-f complex are cytochrome b6, subunit IV (17 kDa polypeptide, PetD), cytochrome f and the Rieske protein, while the 4 small subunits are PetG, PetL, PetM and PetN. The complex functions as a dimer.

Its subcellular location is the cellular thylakoid membrane. In terms of biological role, component of the cytochrome b6-f complex, which mediates electron transfer between photosystem II (PSII) and photosystem I (PSI), cyclic electron flow around PSI, and state transitions. PetG is required for either the stability or assembly of the cytochrome b6-f complex. The chain is Cytochrome b6-f complex subunit 5 from Rippkaea orientalis (strain PCC 8801 / RF-1) (Cyanothece sp. (strain PCC 8801)).